A 293-amino-acid polypeptide reads, in one-letter code: MPSTPTLIFIIIFYLVSLASMLQNGFMMIVLGREWMRNRTLPAADMIVASLASSRFCLHGIAILANLLASFDFCYQANLIGILWDFTNTLIFWLTAWLAIFYCVKISSFSHPVLFWLKWRISQLVPRLLVVSLIIGGLSAVISATGNFMANQMTISQGFHGNCTFGHMSLDFYRYYYLYHSVLMWFTPFFLFLVSVIVLMFSLYQHVEKMRGHRPGPWDLHTQAHTMALKSLTFFFIFYIFFFLALVISSTKRKSMQSYYWAREAIIYTGIFLNSIILLFSNPKLRKALKMRF.

The Extracellular portion of the chain corresponds to 1-6 (MPSTPT). A helical membrane pass occupies residues 7–27 (LIFIIIFYLVSLASMLQNGFM). Over 28–55 (MIVLGREWMRNRTLPAADMIVASLASSR) the chain is Cytoplasmic. A helical membrane pass occupies residues 56-76 (FCLHGIAILANLLASFDFCYQ). Residues 77–79 (ANL) are Extracellular-facing. The helical transmembrane segment at 80–100 (IGILWDFTNTLIFWLTAWLAI) threads the bilayer. Over 101-127 (FYCVKISSFSHPVLFWLKWRISQLVPR) the chain is Cytoplasmic. The chain crosses the membrane as a helical span at residues 128–148 (LLVVSLIIGGLSAVISATGNF). The Extracellular segment spans residues 149-181 (MANQMTISQGFHGNCTFGHMSLDFYRYYYLYHS). Asn162 carries an N-linked (GlcNAc...) asparagine glycan. Residues 182-202 (VLMWFTPFFLFLVSVIVLMFS) form a helical membrane-spanning segment. Residues 203 to 227 (LYQHVEKMRGHRPGPWDLHTQAHTM) lie on the Cytoplasmic side of the membrane. The chain crosses the membrane as a helical span at residues 228 to 248 (ALKSLTFFFIFYIFFFLALVI). Residues 249-264 (SSTKRKSMQSYYWARE) are Extracellular-facing. The chain crosses the membrane as a helical span at residues 265 to 285 (AIIYTGIFLNSIILLFSNPKL). Topologically, residues 286-293 (RKALKMRF) are cytoplasmic.

It belongs to the G-protein coupled receptor T2R family.

The protein localises to the membrane. Its function is as follows. Putative taste receptor which may play a role in the perception of bitterness. This Mus musculus (Mouse) protein is Taste receptor type 2 member 143 (Tas2r143).